The primary structure comprises 345 residues: Fe(3+) ions import ATP-binding protein FbpC (345 aa).

In terms of domain architecture, ABC transporter spans 3 to 233 (LSLKAATVRF…PADEFVARFL (231 aa)). 35–42 (GPSGSGKS) lines the ATP pocket.

The protein belongs to the ABC transporter superfamily. Fe(3+) ion importer (TC 3.A.1.10) family. In terms of assembly, the complex is composed of two ATP-binding proteins (FbpC), two transmembrane proteins (FbpB) and a solute-binding protein (FbpA).

It localises to the cell membrane. The enzyme catalyses Fe(3+)(out) + ATP + H2O = Fe(3+)(in) + ADP + phosphate + H(+). Part of the ABC transporter complex FbpABC involved in Fe(3+) ions import. Responsible for energy coupling to the transport system. This chain is Fe(3+) ions import ATP-binding protein FbpC, found in Streptomyces avermitilis (strain ATCC 31267 / DSM 46492 / JCM 5070 / NBRC 14893 / NCIMB 12804 / NRRL 8165 / MA-4680).